Reading from the N-terminus, the 205-residue chain is Ribosomal RNA small subunit methyltransferase G (205 aa).

S-adenosyl-L-methionine is bound by residues Gly70, Leu75, 121-122, and Arg136; that span reads IE.

The protein belongs to the methyltransferase superfamily. RNA methyltransferase RsmG family.

The protein localises to the cytoplasm. The catalysed reaction is guanosine(527) in 16S rRNA + S-adenosyl-L-methionine = N(7)-methylguanosine(527) in 16S rRNA + S-adenosyl-L-homocysteine. Specifically methylates the N7 position of guanine in position 527 of 16S rRNA. The sequence is that of Ribosomal RNA small subunit methyltransferase G from Methylococcus capsulatus (strain ATCC 33009 / NCIMB 11132 / Bath).